Here is a 1872-residue protein sequence, read N- to C-terminus: Fatty acid synthase beta subunit pkiC (1872 aa).

The interval 174–425 (VFGGQGECSR…DQSRIPFRDR (252 aa)) is acetyltransferase (AT) domain. Residues 591-836 (NRVLGAPPIM…IIAATPGVSD (246 aa)) form an enoyl reductase (ER) domain region. The segment at 1111 to 1132 (TTPASWSTLSLTERDTSEETSD) is disordered. The dehydratase (DH) domain stretch occupies residues 1158-1597 (PSHPLWMRAL…MPLEKLVVEI (440 aa)). The region spanning 1518–1617 (PPSNEPYAQL…CFSILAKRKE (100 aa)) is the MaoC-like domain.

Belongs to the fungal fatty acid synthetase subunit beta family. [Alpha(6)beta(6)] hexamers of two multifunctional subunits (alpha and beta).

The enzyme catalyses acetyl-CoA + n malonyl-CoA + 2n NADPH + 4n H(+) = a long-chain-acyl-CoA + n CoA + n CO2 + 2n NADP(+).. It carries out the reaction holo-[ACP] + acetyl-CoA = acetyl-[ACP] + CoA. It catalyses the reaction holo-[ACP] + malonyl-CoA = malonyl-[ACP] + CoA. The catalysed reaction is a (3R)-hydroxyacyl-[ACP] = a (2E)-enoyl-[ACP] + H2O. The enzyme catalyses a 2,3-saturated acyl-[ACP] + NAD(+) = a (2E)-enoyl-[ACP] + NADH + H(+). It carries out the reaction (9Z)-octadecenoyl-[ACP] + H2O = (9Z)-octadecenoate + holo-[ACP] + H(+). It participates in secondary metabolite biosynthesis. Functionally, fatty acid synthase beta subunit; part of the pki gene cluster that mediates the biosynthesis of 2,4-dihydroxy-3-methyl-6-(2-oxoundecyl)benzaldehyde. The first step in the pathway is the generation of the decanoyl starter unit by the FAS composed of subunits pkiB and pkiC, which is then transferred directly from the FAS to the SAT domain of the non-reducing polyketide synthase pkiA. PkiA condenses the decanoyyl starter unit with 4 malonyl-CoA units and performs one methylation step to yield 2,4-dihydroxy-3-methyl-6-(2-oxoundecyl)benzaldehyde. This chain is Fatty acid synthase beta subunit pkiC, found in Emericella nidulans (strain FGSC A4 / ATCC 38163 / CBS 112.46 / NRRL 194 / M139) (Aspergillus nidulans).